Reading from the N-terminus, the 953-residue chain is Isoleucine--tRNA ligase (953 aa).

Residues 58–68 (PYANGSIHIGH) carry the 'HIGH' region motif. Glu577 contacts L-isoleucyl-5'-AMP. The 'KMSKS' region motif lies at 618–622 (KMSKS). Lys621 provides a ligand contact to ATP. The Zn(2+) site is built by Cys916, Cys919, Cys936, and Cys939.

Belongs to the class-I aminoacyl-tRNA synthetase family. IleS type 1 subfamily. In terms of assembly, monomer. It depends on Zn(2+) as a cofactor.

Its subcellular location is the cytoplasm. The catalysed reaction is tRNA(Ile) + L-isoleucine + ATP = L-isoleucyl-tRNA(Ile) + AMP + diphosphate. Its function is as follows. Catalyzes the attachment of isoleucine to tRNA(Ile). As IleRS can inadvertently accommodate and process structurally similar amino acids such as valine, to avoid such errors it has two additional distinct tRNA(Ile)-dependent editing activities. One activity is designated as 'pretransfer' editing and involves the hydrolysis of activated Val-AMP. The other activity is designated 'posttransfer' editing and involves deacylation of mischarged Val-tRNA(Ile). In Aeromonas salmonicida (strain A449), this protein is Isoleucine--tRNA ligase.